The sequence spans 240 residues: Ribonuclease PH (240 aa).

Residues R87 and 125-127 (GTR) contribute to the phosphate site.

This sequence belongs to the RNase PH family. Homohexameric ring arranged as a trimer of dimers.

It carries out the reaction tRNA(n+1) + phosphate = tRNA(n) + a ribonucleoside 5'-diphosphate. Phosphorolytic 3'-5' exoribonuclease that plays an important role in tRNA 3'-end maturation. Removes nucleotide residues following the 3'-CCA terminus of tRNAs; can also add nucleotides to the ends of RNA molecules by using nucleoside diphosphates as substrates, but this may not be physiologically important. Probably plays a role in initiation of 16S rRNA degradation (leading to ribosome degradation) during starvation. This Pseudomonas syringae pv. syringae (strain B728a) protein is Ribonuclease PH.